The chain runs to 340 residues: CMP-N-acetylneuraminate-beta-galactosamide-alpha-2,3-sialyltransferase 1 (340 aa).

Residues 1-13 lie on the Cytoplasmic side of the membrane; it reads MVTLRKRTLKVLT. Residues 14–34 form a helical; Signal-anchor for type II membrane protein membrane-spanning segment; the sequence is FLVLFIFLTSFFLNYSHTMVA. Residues 35-340 lie on the Lumenal side of the membrane; sequence TTWFPKQMVL…INKIRIFKGR (306 aa). Intrachain disulfides connect cysteine 59–cysteine 64, cysteine 61–cysteine 139, and cysteine 142–cysteine 281. Asparagine 79 carries an N-linked (GlcNAc...) asparagine glycan. Substrate is bound at residue glutamine 105. Residue asparagine 114 is glycosylated (N-linked (GlcNAc...) asparagine). 2 residues coordinate substrate: asparagine 147 and asparagine 170. Asparagine 201 is a glycosylation site (N-linked (GlcNAc...) asparagine). Substrate is bound by residues tyrosine 230, tyrosine 266, glycine 270, glycine 290, histidine 299, and histidine 316. Asparagine 323 is a glycosylation site (N-linked (GlcNAc...) asparagine).

It belongs to the glycosyltransferase 29 family. Post-translationally, the soluble form derives from the membrane form by proteolytic processing. Expressed in several tissues. Highest expression in lung, liver, skeletal muscle, kidney, pancreas, spleen and placenta.

The protein localises to the golgi apparatus. The protein resides in the golgi stack membrane. Its subcellular location is the trans-Golgi network membrane. It localises to the secreted. The catalysed reaction is a beta-D-galactosyl-(1-&gt;3)-N-acetyl-alpha-D-galactosaminyl derivative + CMP-N-acetyl-beta-neuraminate = an N-acetyl-alpha-neuraminyl-(2-&gt;3)-beta-D-galactosyl-(1-&gt;3)-N-acetyl-alpha-D-galactosaminyl derivative + CMP + H(+). The enzyme catalyses a ganglioside GM1 + CMP-N-acetyl-beta-neuraminate = a ganglioside GD1a + CMP + H(+). It catalyses the reaction a ganglioside GM1 (d18:1(4E)) + CMP-N-acetyl-beta-neuraminate = a ganglioside GD1a (d18:1(4E)) + CMP + H(+). It carries out the reaction ganglioside GM1 (d18:1(4E)/18:0) + CMP-N-acetyl-beta-neuraminate = ganglioside GD1a (18:1(4E)/18:0) + CMP + H(+). The catalysed reaction is a ganglioside GA1 + CMP-N-acetyl-beta-neuraminate = a ganglioside GM1b + CMP + H(+). The enzyme catalyses a ganglioside GA1 (d18:1(4E)) + CMP-N-acetyl-beta-neuraminate = a ganglioside GM1b (d18:1(4E)) + CMP + H(+). It catalyses the reaction a ganglioside GD1b + CMP-N-acetyl-beta-neuraminate = a ganglioside GT1b + CMP + H(+). It carries out the reaction a 3-O-[beta-D-galactosyl-(1-&gt;3)-N-acetyl-alpha-D-galactosaminyl]-L-threonyl-[protein] + CMP-N-acetyl-beta-neuraminate = a 3-O-[N-acetyl-alpha-neuraminyl-(2-&gt;3)-beta-D-galactosyl-(1-&gt;3)-N-acetyl-alpha-D-galactosaminyl]-L-threonyl-[protein] + CMP + H(+). The catalysed reaction is a 3-O-[beta-D-galactosyl-(1-&gt;3)-N-acetyl-alpha-D-galactosaminyl]-L-seryl-[protein] + CMP-N-acetyl-beta-neuraminate = 3-O-[N-acetyl-alpha-neuraminyl-(2-&gt;3)-beta-D-galactosyl-(1-&gt;3)-N-acetyl-alpha-D-galactosaminyl]-L-seryl-[protein] + CMP + H(+). It participates in protein modification; protein glycosylation. The protein operates within glycolipid biosynthesis. Functionally, a beta-galactoside alpha2-&gt;3 sialyltransferase involved in terminal sialylation of glycoproteins and glycolipids. Catalyzes the transfer of sialic acid (N-acetyl-neuraminic acid; Neu5Ac) from the nucleotide sugar donor CMP-Neu5Ac onto acceptor Galbeta-(1-&gt;3)-GalNAc-terminated glycoconjugates through an alpha2-3 linkage. Adds sialic acid to the core 1 O-glycan, Galbeta-(1-&gt;3)-GalNAc-O-Ser/Thr, which is a major structure of mucin-type O-glycans. As part of a homeostatic mechanism that regulates CD8-positive T cell numbers, sialylates core 1 O-glycans of T cell glycoproteins, SPN/CD43 and PTPRC/CD45. Prevents premature apoptosis of thymic CD8-positive T cells prior to peripheral emigration, whereas in the secondary lymphoid organs controls the survival of CD8-positive memory T cells generated following a successful immune response. Transfers sialic acid to asialofetuin, presumably onto Galbeta-(1-&gt;3)-GalNAc-O-Ser. Sialylates GM1a, GA1 and GD1b gangliosides to form GD1a, GM1b and GT1b, respectively. The polypeptide is CMP-N-acetylneuraminate-beta-galactosamide-alpha-2,3-sialyltransferase 1 (Homo sapiens (Human)).